A 242-amino-acid chain; its full sequence is ATP-dependent dethiobiotin synthetase BioD (242 aa).

ATP is bound at residue 12-17; that stretch reads EVGKTV. Threonine 16 contributes to the Mg(2+) binding site. Lysine 37 is a catalytic residue. Position 41 (serine 41) interacts with substrate. ATP contacts are provided by residues aspartate 51 and 112–115; that span reads EGAG. Residues aspartate 51 and glutamate 112 each coordinate Mg(2+).

It belongs to the dethiobiotin synthetase family. As to quaternary structure, homodimer. It depends on Mg(2+) as a cofactor.

The protein localises to the cytoplasm. It carries out the reaction (7R,8S)-7,8-diammoniononanoate + CO2 + ATP = (4R,5S)-dethiobiotin + ADP + phosphate + 3 H(+). The protein operates within cofactor biosynthesis; biotin biosynthesis; biotin from 7,8-diaminononanoate: step 1/2. In terms of biological role, catalyzes a mechanistically unusual reaction, the ATP-dependent insertion of CO2 between the N7 and N8 nitrogen atoms of 7,8-diaminopelargonic acid (DAPA, also called 7,8-diammoniononanoate) to form a ureido ring. In Bacillus thuringiensis (strain Al Hakam), this protein is ATP-dependent dethiobiotin synthetase BioD.